The following is a 581-amino-acid chain: DNA primase (581 aa).

The CHC2-type zinc finger occupies 40 to 64; it reads CPFHNEKTPSFTVNGEKQFYHCFGC. The Toprim domain maps to 259-341; it reads QRLLVVEGYM…GRQVRFMFLP (83 aa). Positions 265, 309, and 311 each coordinate Mg(2+).

It belongs to the DnaG primase family. Monomer. Interacts with DnaB. The cofactor is Zn(2+). Requires Mg(2+) as cofactor.

It catalyses the reaction ssDNA + n NTP = ssDNA/pppN(pN)n-1 hybrid + (n-1) diphosphate.. Its function is as follows. RNA polymerase that catalyzes the synthesis of short RNA molecules used as primers for DNA polymerase during DNA replication. This Salmonella typhimurium (strain LT2 / SGSC1412 / ATCC 700720) protein is DNA primase.